Here is a 283-residue protein sequence, read N- to C-terminus: NFU1 iron-sulfur cluster scaffold homolog, mitochondrial (283 aa).

The transit peptide at 1-30 (MSKFLSQAALNTLRNTRLGSRQLVRSFAGI) directs the protein to the mitochondrion. The nifU stretch occupies residues 182–250 (IKELLDTRIR…IPEVESVEQV (69 aa)). 2 residues coordinate [4Fe-4S] cluster: Cys219 and Cys222.

This sequence belongs to the NifU family.

Its subcellular location is the mitochondrion. Functionally, molecular scaffold for [Fe-S] cluster assembly of mitochondrial iron-sulfur proteins. This Drosophila yakuba (Fruit fly) protein is NFU1 iron-sulfur cluster scaffold homolog, mitochondrial.